Reading from the N-terminus, the 1174-residue chain is RecBCD enzyme subunit RecB (1174 aa).

The segment at M1–L852 is DNA-binding and helicase activity, interacts with RecC. Positions D4–S449 constitute a UvrD-like helicase ATP-binding domain. Position 25-32 (A25–T32) interacts with ATP. A UvrD-like helicase C-terminal domain is found at P479–G745. Residues T900 to S1174 form a nuclease activity, interacts with RecD and RecA region. 3 residues coordinate Mg(2+): H957, D1068, and D1081. The For nuclease activity role is filled by D1081.

It belongs to the helicase family. UvrD subfamily. As to quaternary structure, heterotrimer of RecB, RecC and RecD. All subunits contribute to DNA-binding. Interacts with RecA. It depends on Mg(2+) as a cofactor.

It catalyses the reaction Exonucleolytic cleavage (in the presence of ATP) in either 5'- to 3'- or 3'- to 5'-direction to yield 5'-phosphooligonucleotides.. It carries out the reaction Couples ATP hydrolysis with the unwinding of duplex DNA by translocating in the 3'-5' direction.. The catalysed reaction is ATP + H2O = ADP + phosphate + H(+). Its function is as follows. A helicase/nuclease that prepares dsDNA breaks (DSB) for recombinational DNA repair. Binds to DSBs and unwinds DNA via a highly rapid and processive ATP-dependent bidirectional helicase activity. Unwinds dsDNA until it encounters a Chi (crossover hotspot instigator) sequence from the 3' direction. Cuts ssDNA a few nucleotides 3' to the Chi site. The properties and activities of the enzyme are changed at Chi. The Chi-altered holoenzyme produces a long 3'-ssDNA overhang and facilitates RecA-binding to the ssDNA for homologous DNA recombination and repair. Holoenzyme degrades any linearized DNA that is unable to undergo homologous recombination. In the holoenzyme this subunit contributes ATPase, 3'-5' helicase, exonuclease activity and loads RecA onto ssDNA. This Buchnera aphidicola subsp. Acyrthosiphon pisum (strain APS) (Acyrthosiphon pisum symbiotic bacterium) protein is RecBCD enzyme subunit RecB.